A 107-amino-acid polypeptide reads, in one-letter code: Large ribosomal subunit protein uL24 (107 aa).

It belongs to the universal ribosomal protein uL24 family. As to quaternary structure, part of the 50S ribosomal subunit.

Functionally, one of two assembly initiator proteins, it binds directly to the 5'-end of the 23S rRNA, where it nucleates assembly of the 50S subunit. One of the proteins that surrounds the polypeptide exit tunnel on the outside of the subunit. The protein is Large ribosomal subunit protein uL24 of Nitrosomonas eutropha (strain DSM 101675 / C91 / Nm57).